The chain runs to 395 residues: MRSPSAAWLLGGVLLLAASGSCNRTVPGNKSKGRSLIGNVDNSPVVAGRGVTVKPGFSVDEFSTSVLTGKLTTVFLPVVYTIVFVVGLPSNGMALWVFLFRTKKKHPAVIYMANLALADLLSVTWFPLKIAYHIHGNNWIYGESLCKVLIGFFYGNMYCSILFMTCLSVQRYWVIVNPMVHPKKQANIAIGVSLGIWLLILLLTIPLYVVKQTSYIRALNITTCHDVLPEEVLVGDMFNYFLSLAIGVFLFPAFLTASAYVLMIRTLQSSAMDESSGKKRRRAIKLIVTVLAMYLICFTPSNLLLVVHYFLIKTRGQSHVYALYIVALCLSTLNSCIDPFVYYFISQDFRDHAKNALLCRSVRTVKRMQVSLSSKKFSGKSSSYSSSSTSVKGSY.

Positions 1-25 (MRSPSAAWLLGGVLLLAASGSCNRT) are cleaved as a signal peptide. Asn23 and Asn29 each carry an N-linked (GlcNAc...) asparagine glycan. A propeptide spans 26–34 (VPGNKSKGR) (removed for receptor activation). The Extracellular portion of the chain corresponds to 35 to 69 (SLIGNVDNSPVVAGRGVTVKPGFSVDEFSTSVLTG). The helical transmembrane segment at 70–99 (KLTTVFLPVVYTIVFVVGLPSNGMALWVFL) threads the bilayer. The Cytoplasmic segment spans residues 100 to 106 (FRTKKKH). The helical transmembrane segment at 107–135 (PAVIYMANLALADLLSVTWFPLKIAYHIH) threads the bilayer. The Extracellular segment spans residues 136-147 (GNNWIYGESLCK). Cys146 and Cys224 are disulfide-bonded. Residues 148–175 (VLIGFFYGNMYCSILFMTCLSVQRYWVI) traverse the membrane as a helical segment. Residues 176–181 (VNPMVH) lie on the Cytoplasmic side of the membrane. Residues 182 to 209 (PKKQANIAIGVSLGIWLLILLLTIPLYV) form a helical membrane-spanning segment. The Extracellular segment spans residues 210–233 (VKQTSYIRALNITTCHDVLPEEVL). A glycan (N-linked (GlcNAc...) asparagine) is linked at Asn220. A helical transmembrane segment spans residues 234–267 (VGDMFNYFLSLAIGVFLFPAFLTASAYVLMIRTL). At 268 to 275 (QSSAMDES) the chain is on the cytoplasmic side. A helical transmembrane segment spans residues 276 to 315 (SGKKRRRAIKLIVTVLAMYLICFTPSNLLLVVHYFLIKTR). Topologically, residues 316–321 (GQSHVY) are extracellular. A helical membrane pass occupies residues 322–345 (ALYIVALCLSTLNSCIDPFVYYFI). Topologically, residues 346 to 395 (SQDFRDHAKNALLCRSVRTVKRMQVSLSSKKFSGKSSSYSSSSTSVKGSY) are cytoplasmic. Residue Cys359 is the site of S-palmitoyl cysteine attachment.

It belongs to the G-protein coupled receptor 1 family. Interacts with TLR4, COPS5 and TMED2. Interacts with GNAQ, GNA11, GNA12, GNA13 and GNA14. In terms of processing, a proteolytic cleavage generates a new N-terminus that functions as a tethered ligand. Activating serine proteases include trypsin, mast cell tryptase, coagulation factors VII and Xa, myeloblastin/PRTN3 and membrane-type serine protease 1/ST14. Proposed subsequent cleavage by serine proteases is leading to receptor deactivation and include neutrophil elastase and cathepsin G. At least in part, implicated proteases are also shown to activate the receptor; the glycosylation status of the receptor is thought to contribute to the difference. Post-translationally, N-glycosylated and sialylated. Multiple phosphorylated on serine and threonine residues in the cytoplasmic region upon receptor activation; required for receptor desensitization and recruitment of beta-arrestin. In terms of processing, monoubiquitinated by CBL at the plasma membrane and in early endosomes; not required for receptor endocytosis but for translocation to late endosomes or lysosomes. Deubiquitination involves STAMBP and USP8; required for lysosomal trafficking and receptor degradation.

The protein resides in the cell membrane. Its function is as follows. Receptor for trypsin and trypsin-like enzymes coupled to G proteins. Its function is mediated through the activation of several signaling pathways including phospholipase C (PLC), intracellular calcium, mitogen-activated protein kinase (MAPK), I-kappaB kinase/NF-kappaB and Rho. Can also be transactivated by cleaved F2R/PAR1. Involved in modulation of inflammatory responses and regulation of innate and adaptive immunity, and acts as a sensor for proteolytic enzymes generated during infection. Generally is promoting inflammation. Can signal synergistically with TLR4 and probably TLR2 in inflammatory responses and modulates TLR3 signaling. Has a protective role in establishing the endothelial barrier; the activity involves coagulation factor X. Regulates endothelial cell barrier integrity during neutrophil extravasation, probably following proteolytic cleavage by PRTN3. Proposed to have a bronchoprotective role in airway epithelium, but also shown to compromise the airway epithelial barrier by interrupting E-cadherin adhesion. Involved in the regulation of vascular tone; activation results in hypotension presumably mediated by vasodilation. Associates with a subset of G proteins alpha subunits such as GNAQ, GNA11, GNA14, GNA12 and GNA13, but probably not with G(o) alpha, G(i) subunit alpha-1 and G(i) subunit alpha-2. Believed to be a class B receptor which internalizes as a complex with arrestin and traffic with it to endosomal vesicles, presumably as desensitized receptor, for extended periods of time. Mediates inhibition of TNF-alpha stimulated JNK phosphorylation via coupling to GNAQ and GNA11; the function involves dissociation of RIPK1 and TRADD from TNFR1. Mediates phosphorylation of nuclear factor NF-kappa-B RELA subunit at 'Ser-536'; the function involves IKBKB and is predominantly independent of G proteins. Involved in cellular migration. Involved in cytoskeletal rearrangement and chemotaxis through beta-arrestin-promoted scaffolds; the function is independent of GNAQ and GNA11 and involves promotion of cofilin dephosphorylation and actin filament severing. Induces redistribution of COPS5 from the plasma membrane to the cytosol and activation of the JNK cascade is mediated by COPS5. Involved in the recruitment of leukocytes to the sites of inflammation and is the major PAR receptor capable of modulating eosinophil function such as pro-inflammatory cytokine secretion, superoxide production and degranulation. During inflammation promotes dendritic cell maturation, trafficking to the lymph nodes and subsequent T-cell activation. Involved in antimicrobial response of innate immune cells; activation enhances phagocytosis of Gram-positive and killing of Gram-negative bacteria. Acts synergistically with interferon-gamma in enhancing antiviral responses. Probably mediates activation of pro-inflammatory and pro-fibrotic responses in fibroblasts, triggered by coagulation factor Xa (F10). Probably mediates activation of barrier protective signaling responses in endothelial cells, triggered by coagulation factor Xa (F10). The protein is Proteinase-activated receptor 2 (F2RL1) of Bos taurus (Bovine).